The chain runs to 1785 residues: BCL-6 corepressor-like protein 1 (1785 aa).

Disordered stretches follow at residues 65–101 (VGSG…KMDY), 113–137 (VPLS…NSRA), and 343–368 (ASTP…GPPS). Positions 83 to 97 (KLGHKSEDKPDDPQP) are enriched in basic and acidic residues. At serine 496 the chain carries Phosphoserine. Polar residues-rich tracts occupy residues 527–539 (PCTS…TTQP) and 586–600 (GTEQ…TFSP). 2 disordered regions span residues 527-550 (PCTS…PLAD) and 562-646 (PTPQ…PMPV). 2 positions are modified to phosphoserine: serine 599 and serine 613. Lysine 747 participates in a covalent cross-link: Glycyl lysine isopeptide (Lys-Gly) (interchain with G-Cter in SUMO2). Disordered stretches follow at residues 753-781 (IIDQ…QPST), 876-901 (SSSE…EQDP), and 937-977 (VQPS…LKLA). Phosphoserine occurs at positions 1029 and 1033. Residue lysine 1092 forms a Glycyl lysine isopeptide (Lys-Gly) (interchain with G-Cter in SUMO2) linkage. 2 disordered regions span residues 1107–1293 (PDDV…QGRR) and 1312–1487 (WDTN…PEAR). A Phosphoserine modification is found at serine 1162. Basic residues predominate over residues 1176–1185 (VRGKHKHRKP). The span at 1195–1213 (KRADSHEEGSLEKKAKSSF) shows a compositional bias: basic and acidic residues. The span at 1222–1234 (STRTRSQSGSICS) shows a compositional bias: polar residues. Over residues 1271–1284 (TQRDTQYRSHHAQD) the composition is skewed to basic and acidic residues. A compositionally biased stretch (acidic residues) spans 1314–1324 (TNEEEEEEEEE). The short motif at 1328–1336 (KRKKRRRQK) is the Nuclear localization signal element. Over residues 1328–1339 (KRKKRRRQKSRK) the composition is skewed to basic residues. A compositionally biased stretch (basic and acidic residues) spans 1352–1363 (EQRRKGRADLKA). Polar residues predominate over residues 1440-1449 (WSQQKTRSPK). A compositionally biased stretch (low complexity) spans 1461 to 1480 (TPSKSRSASSEEASESPTAR). Serine 1476 bears the Phosphoserine mark. ANK repeat units follow at residues 1529-1558 (AGYT…NVNC), 1562-1591 (DGTR…DPTL), and 1595-1623 (SGQT…QGRA). The interval 1668–1785 (DDFMFELSDK…SEVEFQSCNS (118 aa)) is PCGF Ub-like fold domain (PUFD); required for the interaction with the KDM2B-SKP1 heterodimeric complex.

It belongs to the BCOR family. As to quaternary structure, interacts with PCGF1, forming heterodimers. The PCGF1-BCORL1 heterodimeric complex interacts with the KDM2B-SKP1 heterodimeric complex to form a homotetrameric polycomb repression complex 1 (PRC1.1). Interacts with SKP1. Interacts with CTBP1, HDAC4, HDAC5 and HDAC7. As to expression, detected in testis and prostate. Detected at lower levels in peripheral blood leukocytes and spleen. Mainly expressed in the spermatogonia and primary spermatocytes.

It is found in the nucleus. Functionally, transcriptional corepressor. May specifically inhibit gene expression when recruited to promoter regions by sequence-specific DNA-binding proteins such as BCL6. This repression may be mediated at least in part by histone deacetylase activities which can associate with this corepressor. In Homo sapiens (Human), this protein is BCL-6 corepressor-like protein 1.